The primary structure comprises 229 residues: DNA repair protein RecO (229 aa).

It belongs to the RecO family.

In terms of biological role, involved in DNA repair and RecF pathway recombination. The protein is DNA repair protein RecO of Legionella pneumophila (strain Corby).